A 360-amino-acid chain; its full sequence is Phospho-N-acetylmuramoyl-pentapeptide-transferase (360 aa).

The next 10 helical transmembrane spans lie at 24–44 (RAVM…PWTI), 69–89 (GTPT…TLLW), 92–112 (WANP…ALGF), 133–153 (MVWQ…LAAN), 158–178 (ILIV…GFLV), 199–219 (GLAT…AYAS), 239–259 (VVIF…FNAY), 263–283 (VFMG…VAVI), 288–308 (FVLV…MLQV), and 337–357 (QVVV…LSTL).

This sequence belongs to the glycosyltransferase 4 family. MraY subfamily. Mg(2+) serves as cofactor.

It localises to the cell inner membrane. It catalyses the reaction UDP-N-acetyl-alpha-D-muramoyl-L-alanyl-gamma-D-glutamyl-meso-2,6-diaminopimeloyl-D-alanyl-D-alanine + di-trans,octa-cis-undecaprenyl phosphate = di-trans,octa-cis-undecaprenyl diphospho-N-acetyl-alpha-D-muramoyl-L-alanyl-D-glutamyl-meso-2,6-diaminopimeloyl-D-alanyl-D-alanine + UMP. It participates in cell wall biogenesis; peptidoglycan biosynthesis. Catalyzes the initial step of the lipid cycle reactions in the biosynthesis of the cell wall peptidoglycan: transfers peptidoglycan precursor phospho-MurNAc-pentapeptide from UDP-MurNAc-pentapeptide onto the lipid carrier undecaprenyl phosphate, yielding undecaprenyl-pyrophosphoryl-MurNAc-pentapeptide, known as lipid I. In Neisseria meningitidis serogroup A / serotype 4A (strain DSM 15465 / Z2491), this protein is Phospho-N-acetylmuramoyl-pentapeptide-transferase.